Reading from the N-terminus, the 220-residue chain is uncharacterized protein (220 aa).

This is an uncharacterized protein from Bacillus subtilis (strain 168).